The primary structure comprises 97 residues: Co-chaperonin GroES (97 aa).

The protein belongs to the GroES chaperonin family. As to quaternary structure, heptamer of 7 subunits arranged in a ring. Interacts with the chaperonin GroEL.

It localises to the cytoplasm. In terms of biological role, together with the chaperonin GroEL, plays an essential role in assisting protein folding. The GroEL-GroES system forms a nano-cage that allows encapsulation of the non-native substrate proteins and provides a physical environment optimized to promote and accelerate protein folding. GroES binds to the apical surface of the GroEL ring, thereby capping the opening of the GroEL channel. The chain is Co-chaperonin GroES from Proteus mirabilis (strain HI4320).